Here is a 522-residue protein sequence, read N- to C-terminus: Pectinesterase/pectinesterase inhibitor PPE8B (522 aa).

The first 30 residues, 1–30 (MPYLLMASHNPLPAGKQLLLLVLLCAFFSS), serve as a signal peptide directing secretion. The tract at residues 31–174 (SFIPFASCSI…TSLVQELLTQ (144 aa)) is pectinesterase inhibitor PPE8B. Asparagine 105, asparagine 118, asparagine 119, asparagine 218, asparagine 221, and asparagine 274 each carry an N-linked (GlcNAc...) asparagine glycan. The segment at 208-506 (DAIVAQDGTG…YTVAQFIEGN (299 aa)) is pectinesterase PPE8B. Residues threonine 283 and glutamine 313 each coordinate substrate. Residue aspartate 336 is the Proton donor; for pectinesterase activity of the active site. The cysteines at positions 350 and 370 are disulfide-linked. The active-site Nucleophile; for pectinesterase activity is aspartate 357. A glycan (N-linked (GlcNAc...) asparagine) is linked at asparagine 405. Substrate-binding residues include arginine 426 and tryptophan 428. Asparagine 489 and asparagine 496 each carry an N-linked (GlcNAc...) asparagine glycan.

In the N-terminal section; belongs to the PMEI family. This sequence in the C-terminal section; belongs to the pectinesterase family.

It localises to the secreted. It is found in the cell wall. The catalysed reaction is [(1-&gt;4)-alpha-D-galacturonosyl methyl ester](n) + n H2O = [(1-&gt;4)-alpha-D-galacturonosyl](n) + n methanol + n H(+). Its pathway is glycan metabolism; pectin degradation; 2-dehydro-3-deoxy-D-gluconate from pectin: step 1/5. Its function is as follows. May have roles in the deposition of pectin in developing tissues and in the wall loosening and cell separation that occurs in cell expansion, fruit ripening and abscission. The polypeptide is Pectinesterase/pectinesterase inhibitor PPE8B (Prunus persica (Peach)).